A 406-amino-acid polypeptide reads, in one-letter code: Tryptophan synthase beta chain (406 aa).

K95 carries the post-translational modification N6-(pyridoxal phosphate)lysine.

Belongs to the TrpB family. Tetramer of two alpha and two beta chains. Requires pyridoxal 5'-phosphate as cofactor.

It carries out the reaction (1S,2R)-1-C-(indol-3-yl)glycerol 3-phosphate + L-serine = D-glyceraldehyde 3-phosphate + L-tryptophan + H2O. It participates in amino-acid biosynthesis; L-tryptophan biosynthesis; L-tryptophan from chorismate: step 5/5. The beta subunit is responsible for the synthesis of L-tryptophan from indole and L-serine. This is Tryptophan synthase beta chain from Azotobacter vinelandii (strain DJ / ATCC BAA-1303).